Reading from the N-terminus, the 629-residue chain is uncharacterized protein (629 aa).

The active-site Proton acceptor is the His-562.

It belongs to the GMC oxidoreductase family. Requires FAD as cofactor.

This is an uncharacterized protein from Mycobacterium tuberculosis (strain CDC 1551 / Oshkosh).